Reading from the N-terminus, the 300-residue chain is GTPase Era (300 aa).

In terms of domain architecture, Era-type G spans 7–175; it reads YCGFIAIVGR…EKFVRESLKE (169 aa). The segment at 15–22 is G1; sequence GRPNVGKS. 15-22 contacts GTP; the sequence is GRPNVGKS. The interval 41–45 is G2; the sequence is QTTRH. The G3 stretch occupies residues 62-65; that stretch reads DTPG. Residues 62–66 and 124–127 each bind GTP; these read DTPGL and NKVD. The G4 stretch occupies residues 124-127; sequence NKVD. Residues 154–156 form a G5 region; that stretch reads ISA. A KH type-2 domain is found at 206-283; that stretch reads MGEELPYSVT…HLELWVKVKA (78 aa).

Belongs to the TRAFAC class TrmE-Era-EngA-EngB-Septin-like GTPase superfamily. Era GTPase family. As to quaternary structure, monomer.

The protein resides in the cytoplasm. It localises to the cell inner membrane. Its function is as follows. An essential GTPase that binds both GDP and GTP, with rapid nucleotide exchange. Plays a role in 16S rRNA processing and 30S ribosomal subunit biogenesis and possibly also in cell cycle regulation and energy metabolism. The protein is GTPase Era of Glaesserella parasuis serovar 5 (strain SH0165) (Haemophilus parasuis).